A 221-amino-acid chain; its full sequence is Thymidylate kinase (221 aa).

Glycine 10 to threonine 17 serves as a coordination point for ATP.

Belongs to the thymidylate kinase family.

It carries out the reaction dTMP + ATP = dTDP + ADP. Its function is as follows. Phosphorylation of dTMP to form dTDP in both de novo and salvage pathways of dTTP synthesis. The chain is Thymidylate kinase from Desulforudis audaxviator (strain MP104C).